Consider the following 419-residue polypeptide: Carboxypeptidase A1 (419 aa).

An N-terminal signal peptide occupies residues 1-16 (MWGLLIFSVLLGGVLA). Residues 17–110 (KEDFVGHQVL…QEQMFASQGR (94 aa)) constitute a propeptide, activation peptide. The 294-residue stretch at 121–414 (TYHTLEEIYD…LALLTIMEHT (294 aa)) folds into the Peptidase M14 domain. 2 residues coordinate Zn(2+): His-179 and Glu-182. Substrate contacts are provided by residues 179 to 182 (HSRE), Arg-237, and 254 to 255 (NR). A disulfide bond links Cys-248 and Cys-271. Zn(2+) is bound at residue His-306. Substrate contacts are provided by residues 307–308 (SY) and Tyr-358. Residue Glu-380 is the Proton donor/acceptor of the active site.

This sequence belongs to the peptidase M14 family. Monomer. May form a complex with proelastase 2. Zn(2+) serves as cofactor.

It is found in the secreted. The catalysed reaction is Release of a C-terminal amino acid, but little or no action with -Asp, -Glu, -Arg, -Lys or -Pro.. It catalyses the reaction leukotriene C4 + H2O = leukotriene F4 + glycine. Functionally, carboxypeptidase that catalyzes the release of a C-terminal amino acid, but has little or no action with -Asp, -Glu, -Arg, -Lys or -Pro. Catalyzes the conversion of leukotriene C4 to leukotriene F4 via the hydrolysis of an amide bond. The sequence is that of Carboxypeptidase A1 (CPA1) from Sus scrofa (Pig).